A 500-amino-acid chain; its full sequence is Protein DETOXIFICATION 24 (500 aa).

Residues 1–20 form a disordered region; it reads MSTQEEMEERLLREGSDAEG. The next 12 helical transmembrane spans lie at 48–67, 72–92, 124–144, 160–180, 188–208, 225–245, 266–286, 298–318, 342–362, 384–404, 411–431, and 441–461; these read SSLFRMTSFGSIIVAQAFIG, LGLAAYALLQSTFIRFLYGLM, IVDMAVTTLFLPFIVLAGPIL, IYPWMIPYVYSLIFTMTIQMY, AIVGVLSTLSLALDLVVTWWC, VGSWAMVLAEFVYIFGGWCPF, ISSGFMICLEYWYMSILVLMA, AFSICQYIYTWELNICLGFLG, VILTISTLMGVIFSALCLAFC, VILAVSILLNSIQPILSGVAV, IVAVVNLASYYAIGIPLGLIL, and GLWSGMLAGIAIQTIILCYII.

Belongs to the multi antimicrobial extrusion (MATE) (TC 2.A.66.1) family.

It localises to the membrane. This is Protein DETOXIFICATION 24 from Arabidopsis thaliana (Mouse-ear cress).